Consider the following 734-residue polypeptide: Photosystem I P700 chlorophyll a apoprotein A2 (734 aa).

Transmembrane regions (helical) follow at residues 46 to 69 (IFAS…FHVA), 135 to 158 (LYTG…LHLQ), 175 to 199 (LNHH…HVAI), 273 to 291 (VAHH…GLMY), 330 to 353 (IHFQ…QHMY), 369 to 395 (AALY…IFFI), 417 to 439 (AIIS…LYVH), and 517 to 535 (FLVH…LILV). [4Fe-4S] cluster-binding residues include cysteine 559 and cysteine 568. The next 2 membrane-spanning stretches (helical) occupy residues 575-596 (DFYL…YWHW) and 643-665 (LSVW…MFLI). The chlorophyll a site is built by histidine 654, methionine 662, and tyrosine 670. Tryptophan 671 is a binding site for phylloquinone. Residues 707–727 (LVGLVHFSVGYIFTYAAFLIA) traverse the membrane as a helical segment.

Belongs to the PsaA/PsaB family. In terms of assembly, the PsaA/B heterodimer binds the P700 chlorophyll special pair and subsequent electron acceptors. PSI consists of a core antenna complex that captures photons, and an electron transfer chain that converts photonic excitation into a charge separation. The eukaryotic PSI reaction center is composed of at least 11 subunits. It depends on P700 is a chlorophyll a/chlorophyll a' dimer, A0 is one or more chlorophyll a, A1 is one or both phylloquinones and FX is a shared 4Fe-4S iron-sulfur center. as a cofactor.

It localises to the plastid. It is found in the chloroplast thylakoid membrane. The enzyme catalyses reduced [plastocyanin] + hnu + oxidized [2Fe-2S]-[ferredoxin] = oxidized [plastocyanin] + reduced [2Fe-2S]-[ferredoxin]. PsaA and PsaB bind P700, the primary electron donor of photosystem I (PSI), as well as the electron acceptors A0, A1 and FX. PSI is a plastocyanin-ferredoxin oxidoreductase, converting photonic excitation into a charge separation, which transfers an electron from the donor P700 chlorophyll pair to the spectroscopically characterized acceptors A0, A1, FX, FA and FB in turn. Oxidized P700 is reduced on the lumenal side of the thylakoid membrane by plastocyanin. The protein is Photosystem I P700 chlorophyll a apoprotein A2 of Pisum sativum (Garden pea).